The sequence spans 670 residues: DNA ligase (670 aa).

Residues 33–37, 82–83, and Glu-114 each bind NAD(+); these read DVEYD and SL. The active-site N6-AMP-lysine intermediate is the Lys-116. NAD(+) is bound by residues Arg-137, Glu-174, Lys-291, and Lys-315. Zn(2+) is bound by residues Cys-409, Cys-412, Cys-427, and Cys-433. The 78-residue stretch at 593-670 folds into the BRCT domain; that stretch reads DQELPLEGKV…TEEDLIALIS (78 aa).

It belongs to the NAD-dependent DNA ligase family. LigA subfamily. Mg(2+) is required as a cofactor. Requires Mn(2+) as cofactor.

The enzyme catalyses NAD(+) + (deoxyribonucleotide)n-3'-hydroxyl + 5'-phospho-(deoxyribonucleotide)m = (deoxyribonucleotide)n+m + AMP + beta-nicotinamide D-nucleotide.. Its function is as follows. DNA ligase that catalyzes the formation of phosphodiester linkages between 5'-phosphoryl and 3'-hydroxyl groups in double-stranded DNA using NAD as a coenzyme and as the energy source for the reaction. It is essential for DNA replication and repair of damaged DNA. The sequence is that of DNA ligase from Vibrio atlanticus (strain LGP32) (Vibrio splendidus (strain Mel32)).